Consider the following 567-residue polypeptide: Proline--tRNA ligase (567 aa).

Belongs to the class-II aminoacyl-tRNA synthetase family. ProS type 1 subfamily. In terms of assembly, homodimer.

Its subcellular location is the cytoplasm. It carries out the reaction tRNA(Pro) + L-proline + ATP = L-prolyl-tRNA(Pro) + AMP + diphosphate. Its function is as follows. Catalyzes the attachment of proline to tRNA(Pro) in a two-step reaction: proline is first activated by ATP to form Pro-AMP and then transferred to the acceptor end of tRNA(Pro). As ProRS can inadvertently accommodate and process non-cognate amino acids such as alanine and cysteine, to avoid such errors it has two additional distinct editing activities against alanine. One activity is designated as 'pretransfer' editing and involves the tRNA(Pro)-independent hydrolysis of activated Ala-AMP. The other activity is designated 'posttransfer' editing and involves deacylation of mischarged Ala-tRNA(Pro). The misacylated Cys-tRNA(Pro) is not edited by ProRS. In Idiomarina loihiensis (strain ATCC BAA-735 / DSM 15497 / L2-TR), this protein is Proline--tRNA ligase.